The sequence spans 115 residues: DNA-binding protein TV0008 (115 aa).

Residues 18-37 are disordered; it reads LQRQAMQRQMAEEEEKQREI.

This sequence belongs to the PDCD5 family.

This Thermoplasma volcanium (strain ATCC 51530 / DSM 4299 / JCM 9571 / NBRC 15438 / GSS1) protein is DNA-binding protein TV0008.